The sequence spans 87 residues: Small ribosomal subunit protein bS20 (87 aa).

The protein belongs to the bacterial ribosomal protein bS20 family.

Its function is as follows. Binds directly to 16S ribosomal RNA. The sequence is that of Small ribosomal subunit protein bS20 from Clostridium botulinum (strain Eklund 17B / Type B).